The sequence spans 447 residues: MRSPGAQDNVSVSQGMRAMFYMMEPSETAFQTVEEVPDYVKKATPFFIFLILLELVISWILKGKPSGRLDDALTSISAGVVSRLPSLFFRSLEVTSYIYIWENYRLLELPWDSTWTWYFTFLGVDFGYYWFHRMAHEINIFWAAHQAHHSSEDYNLSTALRQSVLQQYSSWVFYCPLALFIPPSVFAVHIQFNLLYQFWIHTEIIRTLGPLEVILNTPSHHRVHHGRNRYCIDKNYAGTLIIWDRIFGTFEAENEQVIYGLTHPIGTFEPFNVQFHHLLYIWTTFWTTPGFCHKFSVLFKGPGWGPGKPRLGLSEEIPEVTGQEVPFSSSASQLLKIYTVLQFAVMLAFYEETFANTAVLSQVTLLLRIFFFILTLTSIGFLLDQRSKAATMETFRCLLFLTLHRFGHLKPLIPSLSFAFEIFFSVCIAFWGVRSITQLTSGSWKKP.

Helical transmembrane passes span 43–63 (ATPF…ILKG) and 111–131 (WDST…YYWF). Positions 119–249 (FTFLGVDFGY…LIIWDRIFGT (131 aa)) constitute a Fatty acid hydroxylase domain. Positions 132–136 (HRMAH) match the Histidine box-1 motif. Positions 145 to 149 (HQAHH) match the Histidine box-2 motif. A helical membrane pass occupies residues 170–190 (SWVFYCPLALFIPPSVFAVHI). The short motif at 221 to 225 (HRVHH) is the Histidine box-3 element. The next 3 membrane-spanning stretches (helical) occupy residues 340–360 (VLQF…TAVL), 363–383 (VTLL…GFLL), and 413–433 (IPSL…FWGV).

The protein belongs to the sterol desaturase family. TMEM195 subfamily. It depends on Fe cation as a cofactor. In terms of tissue distribution, highly expressed in lever and small intestine.

Its subcellular location is the endoplasmic reticulum membrane. The catalysed reaction is 1-O-(1,2-saturated-alkyl)-sn-glycerol + (6R)-L-erythro-5,6,7,8-tetrahydrobiopterin + O2 = a 1-(1-hydroxyalkyl)-sn-glycerol + (6R)-L-erythro-6,7-dihydrobiopterin + H2O. Its function is as follows. Glyceryl-ether monooxygenase that cleaves the O-alkyl bond of ether lipids. Ether lipids are essential components of brain membranes. The chain is Alkylglycerol monooxygenase (Agmo) from Mus musculus (Mouse).